The following is a 233-amino-acid chain: Leucyl/phenylalanyl-tRNA--protein transferase (233 aa).

It belongs to the L/F-transferase family.

The protein resides in the cytoplasm. It carries out the reaction N-terminal L-lysyl-[protein] + L-leucyl-tRNA(Leu) = N-terminal L-leucyl-L-lysyl-[protein] + tRNA(Leu) + H(+). The catalysed reaction is N-terminal L-arginyl-[protein] + L-leucyl-tRNA(Leu) = N-terminal L-leucyl-L-arginyl-[protein] + tRNA(Leu) + H(+). It catalyses the reaction L-phenylalanyl-tRNA(Phe) + an N-terminal L-alpha-aminoacyl-[protein] = an N-terminal L-phenylalanyl-L-alpha-aminoacyl-[protein] + tRNA(Phe). In terms of biological role, functions in the N-end rule pathway of protein degradation where it conjugates Leu, Phe and, less efficiently, Met from aminoacyl-tRNAs to the N-termini of proteins containing an N-terminal arginine or lysine. The polypeptide is Leucyl/phenylalanyl-tRNA--protein transferase (Laribacter hongkongensis (strain HLHK9)).